The chain runs to 177 residues: MAELTTIARPYAKAAFDFAIEHNAVDNWAEMLTFAALVSENETMQPLLNGALANTKLAALFINVCGEQINKQGQNLIKVMAENGRLSVLPTVSKLFSDFRNEWAKEVEANVVSATELSLEQQQHISVSLEKRLARKVKLNCSTDTALIAGAIIQVGDLVIDGSVRGKLSRLSDTLQS.

This sequence belongs to the ATPase delta chain family. F-type ATPases have 2 components, F(1) - the catalytic core - and F(0) - the membrane proton channel. F(1) has five subunits: alpha(3), beta(3), gamma(1), delta(1), epsilon(1). F(0) has three main subunits: a(1), b(2) and c(10-14). The alpha and beta chains form an alternating ring which encloses part of the gamma chain. F(1) is attached to F(0) by a central stalk formed by the gamma and epsilon chains, while a peripheral stalk is formed by the delta and b chains.

It localises to the cell inner membrane. F(1)F(0) ATP synthase produces ATP from ADP in the presence of a proton or sodium gradient. F-type ATPases consist of two structural domains, F(1) containing the extramembraneous catalytic core and F(0) containing the membrane proton channel, linked together by a central stalk and a peripheral stalk. During catalysis, ATP synthesis in the catalytic domain of F(1) is coupled via a rotary mechanism of the central stalk subunits to proton translocation. Functionally, this protein is part of the stalk that links CF(0) to CF(1). It either transmits conformational changes from CF(0) to CF(1) or is implicated in proton conduction. In Shewanella putrefaciens (strain CN-32 / ATCC BAA-453), this protein is ATP synthase subunit delta.